The following is a 149-amino-acid chain: Nucleoside diphosphate kinase (149 aa).

The ATP site is built by K9, F57, R85, T91, R102, and N112. The active-site Pros-phosphohistidine intermediate is the H115.

It belongs to the NDK family. Homotetramer. Mg(2+) is required as a cofactor.

The protein resides in the cytoplasm. It carries out the reaction a 2'-deoxyribonucleoside 5'-diphosphate + ATP = a 2'-deoxyribonucleoside 5'-triphosphate + ADP. It catalyses the reaction a ribonucleoside 5'-diphosphate + ATP = a ribonucleoside 5'-triphosphate + ADP. Major role in the synthesis of nucleoside triphosphates other than ATP. The ATP gamma phosphate is transferred to the NDP beta phosphate via a ping-pong mechanism, using a phosphorylated active-site intermediate. The protein is Nucleoside diphosphate kinase of Desulfitobacterium hafniense (strain DSM 10664 / DCB-2).